The sequence spans 163 residues: ADP-ribosylation factor-like protein 2-binding protein (163 aa).

This sequence belongs to the ARL2BP family. As to quaternary structure, interacts with GTP bound ARL2 and ARL3; the complex ARL2-ARL2BP as well as ARL2BP alone, binds to SLC25A4/ANT1. Interaction with ARL2 may be required for targeting to cilia basal body. Interacts with STAT3; interaction is enhanced with ARL2. Found in a complex with ARL2BP, ARL2 and SLC25A6. Found in a complex with ARL2, ARL2BP and SLC25A4. Interacts with STAT2, STAT3 and STAT4. As to expression, widely expressed, with most abundant activity in brain, especially in hippocampus and cortex. Also expressed in lung, cerebellum, liver, kidney, retina, spleen, muscle and heart (at protein level).

The protein localises to the cytoplasm. Its subcellular location is the mitochondrion intermembrane space. The protein resides in the cytoskeleton. It localises to the microtubule organizing center. It is found in the centrosome. The protein localises to the nucleus. Its subcellular location is the cilium basal body. Together with ARL2, plays a role in the nuclear translocation, retention and transcriptional activity of STAT3. May play a role as an effector of ARL2. The chain is ADP-ribosylation factor-like protein 2-binding protein (Arl2bp) from Mus musculus (Mouse).